The primary structure comprises 242 residues: UPF0309 protein BSUIS_B0903 (242 aa).

Residues 30 to 214 enclose the SIS domain; sequence AADLIAAAAR…ARLVGEGDAP (185 aa).

The protein belongs to the UPF0309 family.

This is UPF0309 protein BSUIS_B0903 from Brucella suis (strain ATCC 23445 / NCTC 10510).